Consider the following 618-residue polypeptide: Dihydroxy-acid dehydratase (618 aa).

Residue D81 participates in Mg(2+) binding. Residue C122 coordinates [2Fe-2S] cluster. Residues D123 and K124 each coordinate Mg(2+). At K124 the chain carries N6-carboxylysine. C195 contacts [2Fe-2S] cluster. Residue E493 participates in Mg(2+) binding. Catalysis depends on S519, which acts as the Proton acceptor.

The protein belongs to the IlvD/Edd family. Homodimer. [2Fe-2S] cluster is required as a cofactor. The cofactor is Mg(2+).

It carries out the reaction (2R)-2,3-dihydroxy-3-methylbutanoate = 3-methyl-2-oxobutanoate + H2O. The catalysed reaction is (2R,3R)-2,3-dihydroxy-3-methylpentanoate = (S)-3-methyl-2-oxopentanoate + H2O. Its pathway is amino-acid biosynthesis; L-isoleucine biosynthesis; L-isoleucine from 2-oxobutanoate: step 3/4. It participates in amino-acid biosynthesis; L-valine biosynthesis; L-valine from pyruvate: step 3/4. Functions in the biosynthesis of branched-chain amino acids. Catalyzes the dehydration of (2R,3R)-2,3-dihydroxy-3-methylpentanoate (2,3-dihydroxy-3-methylvalerate) into 2-oxo-3-methylpentanoate (2-oxo-3-methylvalerate) and of (2R)-2,3-dihydroxy-3-methylbutanoate (2,3-dihydroxyisovalerate) into 2-oxo-3-methylbutanoate (2-oxoisovalerate), the penultimate precursor to L-isoleucine and L-valine, respectively. The protein is Dihydroxy-acid dehydratase of Shewanella amazonensis (strain ATCC BAA-1098 / SB2B).